The following is a 608-amino-acid chain: Auxin response factor 3 (608 aa).

The interval 1-40 (MGGLIDLNVMETEEDETQTQTPSSASGSVSPTSSSSASVS) is disordered. A compositionally biased stretch (low complexity) spans 18-40 (QTQTPSSASGSVSPTSSSSASVS). Residues 159–261 (FCKTLTASDT…KLRLGVRRAS (103 aa)) constitute a DNA-binding region (TF-B3).

This sequence belongs to the ARF family. Homo and heterodimers. As to expression, expressed in the whole plant.

It is found in the nucleus. Its function is as follows. Auxin response factors (ARFs) are transcriptional factors that bind specifically to the DNA sequence 5'-TGTCTC-3' found in the auxin-responsive promoter elements (AuxREs). Could act as transcriptional activator or repressor. Formation of heterodimers with Aux/IAA proteins may alter their ability to modulate early auxin response genes expression. Involved in the establishment or elaboration of tissue patterning during gynoecial development. In Arabidopsis thaliana (Mouse-ear cress), this protein is Auxin response factor 3 (ARF3).